A 399-amino-acid chain; its full sequence is Centrosomal protein 43 (399 aa).

Residues 70–102 form the LisH domain; it reads DGRLVASLVAEFLQFFNLDFTLAVFHPETSTIQ. Disordered stretches follow at residues 142–216 and 236–311; these read PASV…SKSS and DARD…KRGS. Ser-152 and Ser-160 each carry phosphoserine. Residues 163 to 172 are compositionally biased toward polar residues; that stretch reads GKSSANSTPS. Residue Thr-170 is modified to Phosphothreonine. Residues 175 to 186 show a composition bias toward basic residues; the sequence is PRYKGQGKKKTI. Over residues 197 to 216 the composition is skewed to low complexity; that stretch reads SETSQSEPSVSLSESKSKSS. Phosphoserine is present on Ser-202. Residues 246-256 show a composition bias toward acidic residues; it reads DGDDVEGDSFF. The segment covering 259–275 has biased composition (basic and acidic residues); it reads PIPKPEKTYGWRAEPRK. The segment covering 290–302 has biased composition (low complexity); it reads RSGLSSLAGAPSL. Phosphoserine is present on residues Ser-301 and Ser-326. Residues 328-354 are disordered; the sequence is GLGTGEDEDYADDFNSASHRSEKSELS. Tyr-337 is subject to Phosphotyrosine.

The protein belongs to the CEP43 family. Homodimer. Part of a ternary complex that contains CEP350, CEP43 and MAPRE1. Interacts directly with CEP350 and MAPRE1. Interacts with CEP19. Interacts (via N-terminus) with CEP350 (via C-terminus).

It is found in the cytoplasm. It localises to the cytoskeleton. The protein resides in the microtubule organizing center. The protein localises to the centrosome. Its subcellular location is the centriole. It is found in the cilium basal body. Functionally, required for anchoring microtubules to the centrosomes. Required for ciliation. This chain is Centrosomal protein 43, found in Mus musculus (Mouse).